The chain runs to 163 residues: Ribosome maturation factor RimP (163 aa).

This sequence belongs to the RimP family.

The protein localises to the cytoplasm. In terms of biological role, required for maturation of 30S ribosomal subunits. The sequence is that of Ribosome maturation factor RimP from Bordetella petrii (strain ATCC BAA-461 / DSM 12804 / CCUG 43448).